A 298-amino-acid chain; its full sequence is Plasmodesmata-located protein 7 (298 aa).

Positions 1–30 are cleaved as a signal peptide; it reads MPMAKLRNIIKTLSIFFFLIAATAPSLSSA. Residues 31 to 258 are Extracellular-facing; sequence TSATDTFVFG…YKTNYGGEKT (228 aa). Gnk2-homologous domains lie at 35–139 and 140–240; these read DTFV…NISF and LGQE…TDGA. 6 disulfides stabilise this stretch: Cys-42–Cys-117, Cys-93–Cys-102, Cys-105–Cys-130, Cys-152–Cys-218, Cys-194–Cys-203, and Cys-206–Cys-231. A helical membrane pass occupies residues 259 to 279; it reads FAIIIGLLAAVVLLIIFLLFL. A necessary and sufficient for plasmodesmal targeting region spans residues 259 to 279; sequence FAIIIGLLAAVVLLIIFLLFL. The Cytoplasmic portion of the chain corresponds to 280 to 298; sequence RGVCSRGGDFSILHSFTLI.

This sequence belongs to the cysteine-rich repeat secretory protein family. Plasmodesmata-located proteins (PDLD) subfamily. (Microbial infection) Interacts with Grapevine fanleaf virus (GFLV) 2B-MP. Highly expressed in lateral root and elongation zone.

It localises to the cell membrane. It is found in the cell junction. The protein localises to the plasmodesma. In terms of biological role, modulates cell-to-cell trafficking. This Arabidopsis thaliana (Mouse-ear cress) protein is Plasmodesmata-located protein 7.